Consider the following 330-residue polypeptide: Homeobox protein Hox-C13 (330 aa).

The segment covering 30-47 has biased composition (gly residues); it reads GGGGGGGGGTGGAGGGCS. The tract at residues 30–50 is disordered; sequence GGGGGGGGGTGGAGGGCSGAS. Residues 260 to 319 constitute a DNA-binding region (homeobox); that stretch reads GRKKRVPYTKVQLKELEKEYAASKFITKEKRRRISATTNLSERQVTIWFQNRRVKEKKVV.

It belongs to the Abd-B homeobox family.

It is found in the nucleus. Its function is as follows. Transcription factor which plays a role in hair follicle differentiation. Regulates FOXQ1 expression and that of other hair-specific genes. The polypeptide is Homeobox protein Hox-C13 (HOXC13) (Homo sapiens (Human)).